Reading from the N-terminus, the 140-residue chain is Putative transmembrane protein 49 (140 aa).

Transmembrane regions (helical) follow at residues 23-43 and 93-110; these read LIMS…IGGV and IAVH…RYMY.

The protein resides in the host membrane. The sequence is that of Putative transmembrane protein 49 (SIFV0049) from Saccharolobus islandicus (Sulfolobus islandicus).